The following is a 785-amino-acid chain: Hyperosmolality-gated Ca2+ permeable channel 1.7 (785 aa).

Residues Ile7 to Met27 form a helical membrane-spanning segment. Ser54 is modified (phosphoserine). A run of 9 helical transmembrane segments spans residues Ile101–Val121, Phe156–Met176, Leu373–Val393, Phe425–Met445, Tyr465–Gln485, Ala510–Leu530, Ala582–Phe602, Leu628–Phe648, and Val651–Gly671. The segment at Val725–Asn761 is disordered. Residues Thr739–Asn761 show a composition bias toward polar residues.

Belongs to the CSC1 (TC 1.A.17) family. Phosphorylated and activated by BIK1.

It is found in the membrane. It carries out the reaction Ca(2+)(in) = Ca(2+)(out). Functionally, calcium-permeable channel involved in plant stomatal immunity. The sequence is that of Hyperosmolality-gated Ca2+ permeable channel 1.7 from Arabidopsis thaliana (Mouse-ear cress).